The primary structure comprises 293 residues: Exosome complex component RRP4 (293 aa).

Residues 79-159 (EVGDIVVGRI…SDGAVSLHTR (81 aa)) enclose the S1 motif domain. Ser124 carries the post-translational modification Phosphoserine.

This sequence belongs to the RRP4 family. As to quaternary structure, component of the RNA exosome core complex (Exo-9), composed of EXOSC1, EXOSC2, EXOSC3, EXOSC4, EXOSC5, EXOSC6, EXOSC7, EXOSC8 and EXOSC9; within the complex interacts with EXOSC4 and EXOSC7. The catalytically inactive RNA exosome core complex (Exo-9) associates with the catalytic subunit EXOSC10/RRP6. Exo-9 may associate with DIS3 to form the nucleolar exosome complex, or DIS3L to form the cytoplasmic exosome complex. Exo-9 is formed by a hexameric base ring consisting of the heterodimers EXOSC4-EXOSC9, EXOSC5-EXOSC8 and EXOSC6-EXOSC7, and a cap ring consisting of EXOSC1, EXOSC2 and EXOSC3. The RNA exosome complex associates with cofactors C1D/RRP47, MPHOSPH6/MPP6 and MTREX/MTR4. Interacts with GTPBP1. Interacts with ZFP36L1 (via N-terminus).

Its subcellular location is the cytoplasm. The protein localises to the nucleus. It is found in the nucleolus. Non-catalytic component of the RNA exosome complex which has 3'-&gt;5' exoribonuclease activity and participates in a multitude of cellular RNA processing and degradation events. In the nucleus, the RNA exosome complex is involved in proper maturation of stable RNA species such as rRNA, snRNA and snoRNA, in the elimination of RNA processing by-products and non-coding 'pervasive' transcripts, such as antisense RNA species and promoter-upstream transcripts (PROMPTs), and of mRNAs with processing defects, thereby limiting or excluding their export to the cytoplasm. The RNA exosome may be involved in Ig class switch recombination (CSR) and/or Ig variable region somatic hypermutation (SHM) by targeting AICDA deamination activity to transcribed dsDNA substrates. In the cytoplasm, the RNA exosome complex is involved in general mRNA turnover and specifically degrades inherently unstable mRNAs containing AU-rich elements (AREs) within their 3' untranslated regions, and in RNA surveillance pathways, preventing translation of aberrant mRNAs. It seems to be involved in degradation of histone mRNA. The catalytic inactive RNA exosome core complex of 9 subunits (Exo-9) is proposed to play a pivotal role in the binding and presentation of RNA for ribonucleolysis, and to serve as a scaffold for the association with catalytic subunits and accessory proteins or complexes. EXOSC2 as peripheral part of the Exo-9 complex stabilizes the hexameric ring of RNase PH-domain subunits through contacts with EXOSC4 and EXOSC7. The protein is Exosome complex component RRP4 (EXOSC2) of Bos taurus (Bovine).